The sequence spans 328 residues: Malate dehydrogenase (328 aa).

An NAD(+)-binding site is contributed by Gly11 to Gly17. 2 residues coordinate substrate: Arg94 and Arg100. NAD(+) is bound by residues Asn107, Gln114, and Val131–Asn133. Substrate-binding residues include Asn133 and Arg164. His189 (proton acceptor) is an active-site residue.

This sequence belongs to the LDH/MDH superfamily. MDH type 2 family.

The catalysed reaction is (S)-malate + NAD(+) = oxaloacetate + NADH + H(+). Catalyzes the reversible oxidation of malate to oxaloacetate. This Xanthomonas axonopodis pv. citri (strain 306) protein is Malate dehydrogenase.